Consider the following 324-residue polypeptide: DNA-directed RNA polymerase subunit alpha (324 aa).

The tract at residues 1-228 is alpha N-terminal domain (alpha-NTD); the sequence is MIEFQKPTIR…EHFNLFTDLS (228 aa). The tract at residues 245–324 is alpha C-terminal domain (alpha-CTD); sequence RNKLLDMTIE…STPKEEEEEK (80 aa).

The protein belongs to the RNA polymerase alpha chain family. Homodimer. The RNAP catalytic core consists of 2 alpha, 1 beta, 1 beta' and 1 omega subunit. When a sigma factor is associated with the core the holoenzyme is formed, which can initiate transcription.

The enzyme catalyses RNA(n) + a ribonucleoside 5'-triphosphate = RNA(n+1) + diphosphate. Functionally, DNA-dependent RNA polymerase catalyzes the transcription of DNA into RNA using the four ribonucleoside triphosphates as substrates. In Caldicellulosiruptor bescii (strain ATCC BAA-1888 / DSM 6725 / KCTC 15123 / Z-1320) (Anaerocellum thermophilum), this protein is DNA-directed RNA polymerase subunit alpha.